The sequence spans 239 residues: tRNA1(Val) (adenine(37)-N6)-methyltransferase (239 aa).

This sequence belongs to the methyltransferase superfamily. tRNA (adenine-N(6)-)-methyltransferase family.

The protein resides in the cytoplasm. The enzyme catalyses adenosine(37) in tRNA1(Val) + S-adenosyl-L-methionine = N(6)-methyladenosine(37) in tRNA1(Val) + S-adenosyl-L-homocysteine + H(+). In terms of biological role, specifically methylates the adenine in position 37 of tRNA(1)(Val) (anticodon cmo5UAC). This is tRNA1(Val) (adenine(37)-N6)-methyltransferase from Vibrio campbellii (strain ATCC BAA-1116).